The following is a 207-amino-acid chain: MNNLTAIVLAGGQSSRMGQDKALITVQGVPLLQFVCNIAASCAEIVYIVTPWPERYEHLVLPRCQFIPEAGTQGPLIGFAQGLAQVKSEWVLLLACDLPKLRVEVLQEWAANLDSVPEEAIATLPHHAKGWEPLCGFYRRRCSPPLLEFIHQGGRSFQQWLQHHSVQVLALPTPEILFNCNTPEDLAVIQGEFDDLSPNPSPTRRGA.

GTP is bound by residues 9 to 11 (LAG), Lys21, and Asp97. Asp97 is a Mg(2+) binding site.

Belongs to the MobA family. Mg(2+) serves as cofactor.

It localises to the cytoplasm. The enzyme catalyses Mo-molybdopterin + GTP + H(+) = Mo-molybdopterin guanine dinucleotide + diphosphate. Functionally, transfers a GMP moiety from GTP to Mo-molybdopterin (Mo-MPT) cofactor (Moco or molybdenum cofactor) to form Mo-molybdopterin guanine dinucleotide (Mo-MGD) cofactor. This is Probable molybdenum cofactor guanylyltransferase from Trichormus variabilis (strain ATCC 29413 / PCC 7937) (Anabaena variabilis).